A 788-amino-acid polypeptide reads, in one-letter code: Leucine-rich repeat and fibronectin type-III domain-containing protein 2 (788 aa).

A signal peptide spans 1–20; it reads METLLGGLLAFGMAFAVVDA. The 32-residue stretch at 21 to 52 folds into the LRRNT domain; the sequence is CPKYCVCQNLSESLGTLCPSKGLLFVPPDIDR. Topologically, residues 21–534 are extracellular; sequence CPKYCVCQNL…MHSQILGGTM (514 aa). Residues Asn-29 and Asn-74 are each glycosylated (N-linked (GlcNAc...) asparagine). LRR repeat units lie at residues 53–74, 77–98, 101–122, 125–146, 150–171, 174–195, and 198–219; these read RTVE…DFAN, GLVD…SFLD, SLRS…TLRG, NLQH…AFED, TLED…SVRR, NLHQ…TFAD, and KLAR…PIFA. The LRRCT domain maps to 242–288; the sequence is NPLHCNCELLWLRRLERDDDLKTCGSPGGLKGRYFWHIREEEFVCEP. Positions 289–375 constitute an Ig-like domain; sequence PLITQHTHKL…GEATATVEVS (87 aa). A disulfide bond links Cys-310 and Cys-359. 4 N-linked (GlcNAc...) asparagine glycosylation sites follow: Asn-332, Asn-341, Asn-384, and Asn-457. The segment at 383–423 is disordered; it reads SNSTSRMAPPKSRLSDITGSSKTSRGGGGSGAGEPPKSTPE. In terms of domain architecture, Fibronectin type-III spans 422 to 518; the sequence is PERAVLVSDV…GCAQFFTKAD (97 aa). A helical transmembrane segment spans residues 535 to 555; that stretch reads ILVIGGIIVATLLVFIVILMV. Residues 556–788 lie on the Cytoplasmic side of the membrane; it reads RYKVCNHDAP…SSEWVMESTV (233 aa). Residues 620-641 are compositionally biased toward low complexity; it reads CDSSSSSSLGSGEAAGLSRGPW. Disordered regions lie at residues 620-655 and 668-707; these read CDSS…PSLD and SQRK…ATRA. The span at 642-651 shows a compositional bias: pro residues; that stretch reads RLPPPAPRPK. The PDZ-binding motif lies at 785–788; the sequence is ESTV.

It belongs to the LRFN family. As to quaternary structure, forms heteromeric complexes with LRFN1, LRFN3 and LRFN4. Can form homomeric complexes, but not across cell junctions. Can form heteromeric complexes with LRFN5. Interacts with DLG1, DLG3 and DLG4; interaction with DLG4 is mediated by the PDZ-binding domain. Also interacts with DLG2. Interacts with 2 NMDA receptor subunits GRIN1 and GRIN2A.

It is found in the membrane. The protein localises to the synapse. The protein resides in the postsynaptic cell membrane. Functionally, promotes neurite outgrowth in hippocampal neurons. Enhances the cell surface expression of GRIN1 and GRIN2A NMDA receptor subunits. May play a role in redistributing DLG4 to the cell periphery. The chain is Leucine-rich repeat and fibronectin type-III domain-containing protein 2 (Lrfn2) from Rattus norvegicus (Rat).